A 463-amino-acid chain; its full sequence is Nicotinate phosphoribosyltransferase pncB2 (463 aa).

His-202 bears the Phosphohistidine mark.

The protein belongs to the NAPRTase family. Transiently phosphorylated on a His residue during the reaction cycle. Phosphorylation strongly increases the affinity for substrates and increases the rate of nicotinate D-ribonucleotide production. Dephosphorylation regenerates the low-affinity form of the enzyme, leading to product release.

The enzyme catalyses nicotinate + 5-phospho-alpha-D-ribose 1-diphosphate + ATP + H2O = nicotinate beta-D-ribonucleotide + ADP + phosphate + diphosphate. Its pathway is cofactor biosynthesis; NAD(+) biosynthesis; nicotinate D-ribonucleotide from nicotinate: step 1/1. Functionally, involved in the Preiss-Handler pathway, which is a recycling route that permits the salvage of free nicotinamide (NM) and nicotinic acid (Na) involved in the NAD biosynthesis. Catalyzes the synthesis of beta-nicotinate D-ribonucleotide from nicotinate and 5-phospho-D-ribose 1-phosphate at the expense of ATP. It is not able to use nicotinamide. PncB2 appears to be responsible for the increased salvage synthesis of NAD during infection of host tissues. In Mycobacterium tuberculosis (strain CDC 1551 / Oshkosh), this protein is Nicotinate phosphoribosyltransferase pncB2 (pncB2).